A 229-amino-acid chain; its full sequence is ATP synthase subunit a (229 aa).

The next 7 membrane-spanning stretches (helical) occupy residues 25 to 45, 58 to 75, 81 to 101, 110 to 130, 141 to 161, 175 to 195, and 196 to 216; these read VHIIYTWVVMALLITLGVLGA, FLEVLISGIEEFMVSVTG, FFPLAGTIAIFIAVSNLIGLV, SINTPLACAIVVFVFTHFIGI, FLGPVWWLAPLIFPIEIIGHL, MMGHESVLVILFMLGGAFFAP, and LPIMALGIFVAFVQAFVFFLL.

This sequence belongs to the ATPase A chain family. F-type ATPases have 2 components, CF(1) - the catalytic core - and CF(0) - the membrane proton channel. CF(1) has five subunits: alpha(3), beta(3), gamma(1), delta(1), epsilon(1). CF(0) has three main subunits: a(1), b(2) and c(9-12). The alpha and beta chains form an alternating ring which encloses part of the gamma chain. CF(1) is attached to CF(0) by a central stalk formed by the gamma and epsilon chains, while a peripheral stalk is formed by the delta and b chains.

Its subcellular location is the cell inner membrane. Its function is as follows. Key component of the proton channel; it plays a direct role in the translocation of protons across the membrane. This chain is ATP synthase subunit a, found in Desulfosudis oleivorans (strain DSM 6200 / JCM 39069 / Hxd3) (Desulfococcus oleovorans).